Consider the following 833-residue polypeptide: DNA polymerase I, thermostable (833 aa).

The 95-residue stretch at 173–267 folds into the 5'-3' exonuclease domain; sequence VPPERWVDFR…FKALRRRTPD (95 aa). A polymerase region spans residues 412-833; it reads ERLFQNLFPR…GRDWLEAKQD (422 aa).

It belongs to the DNA polymerase type-A family.

It catalyses the reaction DNA(n) + a 2'-deoxyribonucleoside 5'-triphosphate = DNA(n+1) + diphosphate. Its function is as follows. In addition to polymerase activity, this DNA polymerase exhibits 5'-3' exonuclease activity. Unlikely to have 3'-5' exonuclease activity due to absence of a 3'-5' exonuclease domain. This Thermus filiformis protein is DNA polymerase I, thermostable (polA).